The sequence spans 313 residues: Peroxidase 57 (313 aa).

The first 22 residues, 1–22 (MMKGAKFSSLLVLFFIFPIAFA), serve as a signal peptide directing secretion. 4 disulfides stabilise this stretch: Cys33–Cys109, Cys66–Cys71, Cys115–Cys309, and Cys192–Cys224. Catalysis depends on His64, which acts as the Proton acceptor. Ca(2+) is bound by residues Asp65, Val68, Gly70, Asp72, and Ser74. Pro155 lines the substrate pocket. His185 contacts heme b. Thr186 is a binding site for Ca(2+). Residues Asp233, Ser236, and Asp241 each contribute to the Ca(2+) site.

It belongs to the peroxidase family. Classical plant (class III) peroxidase subfamily. The cofactor is heme b. Requires Ca(2+) as cofactor. As to expression, mainly expressed in roots.

It is found in the secreted. It catalyses the reaction 2 a phenolic donor + H2O2 = 2 a phenolic radical donor + 2 H2O. Its function is as follows. Removal of H(2)O(2), oxidation of toxic reductants, biosynthesis and degradation of lignin, suberization, auxin catabolism, response to environmental stresses such as wounding, pathogen attack and oxidative stress. These functions might be dependent on each isozyme/isoform in each plant tissue. In Arabidopsis thaliana (Mouse-ear cress), this protein is Peroxidase 57 (PER57).